A 343-amino-acid chain; its full sequence is Probable dual-specificity RNA methyltransferase RlmN (343 aa).

Residue Glu94 is the Proton acceptor of the active site. The Radical SAM core domain maps to 100–330 (YDSRVTVCVS…ATVRMSMGSD (231 aa)). A disulfide bridge links Cys107 with Cys335. Residues Cys114, Cys118, and Cys121 each coordinate [4Fe-4S] cluster. S-adenosyl-L-methionine-binding positions include 161–162 (GE), Ser193, 216–218 (SLH), and Asn292. Cys335 functions as the S-methylcysteine intermediate in the catalytic mechanism.

It belongs to the radical SAM superfamily. RlmN family. The cofactor is [4Fe-4S] cluster.

It is found in the cytoplasm. The enzyme catalyses adenosine(2503) in 23S rRNA + 2 reduced [2Fe-2S]-[ferredoxin] + 2 S-adenosyl-L-methionine = 2-methyladenosine(2503) in 23S rRNA + 5'-deoxyadenosine + L-methionine + 2 oxidized [2Fe-2S]-[ferredoxin] + S-adenosyl-L-homocysteine. The catalysed reaction is adenosine(37) in tRNA + 2 reduced [2Fe-2S]-[ferredoxin] + 2 S-adenosyl-L-methionine = 2-methyladenosine(37) in tRNA + 5'-deoxyadenosine + L-methionine + 2 oxidized [2Fe-2S]-[ferredoxin] + S-adenosyl-L-homocysteine. In terms of biological role, specifically methylates position 2 of adenine 2503 in 23S rRNA and position 2 of adenine 37 in tRNAs. This Clostridioides difficile (strain 630) (Peptoclostridium difficile) protein is Probable dual-specificity RNA methyltransferase RlmN.